The chain runs to 653 residues: Polyadenylate-binding protein, cytoplasmic and nuclear (653 aa).

The span at Met-1–Ala-10 shows a compositional bias: basic and acidic residues. Residues Met-1 to Pro-77 are disordered. A compositionally biased stretch (polar residues) spans Asp-17–Ser-27. Low complexity predominate over residues Ala-53–Ser-68. An RRM 1 domain is found at Ala-80 to Arg-158. Position 167 is a phosphothreonine (Thr-167). RRM domains are found at residues Gly-168–Ser-245, Thr-261–Lys-338, and Val-364–Arg-441. The PABC domain occupies Pro-569–Asp-646.

The protein belongs to the polyadenylate-binding protein type-1 family. As to quaternary structure, interacts with cid13.

The protein localises to the cytoplasm. It localises to the nucleus. Its function is as follows. Binds the poly(A) tail of mRNA. Appears to be an important mediator of the multiple roles of the poly(A) tail in mRNA biogenesis, stability and translation. In the nucleus, involved in both mRNA cleavage and polyadenylation. Is also required for efficient mRNA export to the cytoplasm. Acts in concert with a poly(A)-specific nuclease (PAN) to affect poly(A) tail shortening, which may occur concomitantly with either nucleocytoplasmic mRNA transport or translational initiation. In the cytoplasm, stimulates translation initiation and regulates mRNA decay through translation termination-coupled poly(A) shortening, probably mediated by PAN. In Schizosaccharomyces pombe (strain 972 / ATCC 24843) (Fission yeast), this protein is Polyadenylate-binding protein, cytoplasmic and nuclear (pab1).